A 447-amino-acid polypeptide reads, in one-letter code: Eukaryotic translation initiation factor 3 subunit E (447 aa).

A PCI domain is found at 253 to 421 (LELFFNAGYI…GTVVMNHPPS (169 aa)).

It belongs to the eIF-3 subunit E family. As to quaternary structure, component of the eukaryotic translation initiation factor 3 (eIF-3) complex.

Its subcellular location is the cytoplasm. Its function is as follows. Component of the eukaryotic translation initiation factor 3 (eIF-3) complex, which is involved in protein synthesis of a specialized repertoire of mRNAs and, together with other initiation factors, stimulates binding of mRNA and methionyl-tRNAi to the 40S ribosome. The eIF-3 complex specifically targets and initiates translation of a subset of mRNAs involved in cell proliferation. In Chaetomium globosum (strain ATCC 6205 / CBS 148.51 / DSM 1962 / NBRC 6347 / NRRL 1970) (Soil fungus), this protein is Eukaryotic translation initiation factor 3 subunit E.